The primary structure comprises 198 residues: Molybdenum cofactor guanylyltransferase (198 aa).

Residues 14–16 (LAG), Lys-27, Asp-73, and Asp-103 each bind GTP. Asp-103 lines the Mg(2+) pocket.

Belongs to the MobA family. As to quaternary structure, monomer. It depends on Mg(2+) as a cofactor.

It is found in the cytoplasm. The enzyme catalyses Mo-molybdopterin + GTP + H(+) = Mo-molybdopterin guanine dinucleotide + diphosphate. Its function is as follows. Transfers a GMP moiety from GTP to Mo-molybdopterin (Mo-MPT) cofactor (Moco or molybdenum cofactor) to form Mo-molybdopterin guanine dinucleotide (Mo-MGD) cofactor. In Pseudomonas aeruginosa (strain LESB58), this protein is Molybdenum cofactor guanylyltransferase.